A 101-amino-acid polypeptide reads, in one-letter code: Small ribosomal subunit protein uS10 (101 aa).

It belongs to the universal ribosomal protein uS10 family. As to quaternary structure, part of the 30S ribosomal subunit.

Functionally, involved in the binding of tRNA to the ribosomes. This is Small ribosomal subunit protein uS10 from Phocaeicola vulgatus (strain ATCC 8482 / DSM 1447 / JCM 5826 / CCUG 4940 / NBRC 14291 / NCTC 11154) (Bacteroides vulgatus).